Consider the following 375-residue polypeptide: uncharacterized protein (375 aa).

A signal peptide spans 1 to 20; it reads MKNKLFIILIIFIILKIVIC. Topologically, residues 21–335 are extracellular; that stretch reads QNTTPSKLIP…EKQVERKITP (315 aa). Low complexity predominate over residues 30–42; that stretch reads PQQQQKQKQQQTQ. 2 disordered regions span residues 30-74 and 113-253; these read PQQQ…QPQQ and SQNV…PHNH. The segment covering 43-53 has biased composition (basic residues); the sequence is PHHHHHHHQQH. Over residues 54–74 the composition is skewed to low complexity; the sequence is QQHQQQHQPNQQIKQQQQPQQ. Residues 120–151 are compositionally biased toward basic residues; the sequence is PPHHTQQRVPHHHGPNGAPHHHGPNGAPHHHG. Over residues 168-180 the composition is skewed to polar residues; sequence GHNTQGHVQTNHV. A compositionally biased stretch (low complexity) spans 181–220; the sequence is NNINKNNINNNNNNNNNNNNNNNNNNNNNINDNKNIRNNI. Residues 336–356 form a helical membrane-spanning segment; the sequence is IMVLYILLASTMVIQLFIMVF. The Cytoplasmic portion of the chain corresponds to 357 to 375; the sequence is KQVKHIREINAKTTMESLL.

It is found in the membrane. This is an uncharacterized protein from Dictyostelium discoideum (Social amoeba).